The sequence spans 248 residues: Probable transcriptional regulator LumQ (248 aa).

Residues 148-246 (VLIDNYIEQH…GMSPTRYQFF (99 aa)) form the HTH araC/xylS-type domain. 2 DNA-binding regions (H-T-H motif) span residues 165–186 (AELS…KSQM) and 213–236 (LSQV…RRLY).

Its function is as follows. Probable transcriptional regulator. Its target gene(s) is not yet known. The polypeptide is Probable transcriptional regulator LumQ (lumQ) (Photobacterium leiognathi).